The following is a 416-amino-acid chain: MTHINSALEDADPNIASLIQEESKRQENHLELIASENFTSKAVMEAQGSVLTNKYAEGLPNKRYYGGCEHIDKIEGLAIERAKQLFKAEWANVQPHSGAQANFSVFLSLLEPGEKIMGMDLSHGGHLTHGSPVNVSGKWFKAIHYGVDKETQRLEMENVREIALKNRPKLIICGYSAYPRNIDFLAFRSIADEVGAYLLADMAHIAGLVATGIHPSPIPHCDVVTTTTHKTLRGPRGGLILCRNAEFGKRFDKAVFPGSQGGPLEHVIAAKAVAFGEALKPGFSSYCEQLVKNSKALAKRMQDRGIAVVSNGTDNHIVLLDLRSIDMTGKEADSLVSAINVTTNKNTVPFDPKSPFVTSGLRLGTAALTTRGFDEPAFLEVADLIADRLLNPTDLILKNKCQQRVLDLCNRFPLYD.

(6S)-5,6,7,8-tetrahydrofolate is bound by residues Leu-121 and 125-127; that span reads GHL. N6-(pyridoxal phosphate)lysine is present on Lys-230. 354-356 contacts (6S)-5,6,7,8-tetrahydrofolate; that stretch reads SPF.

Belongs to the SHMT family. Homodimer. Pyridoxal 5'-phosphate is required as a cofactor.

It is found in the cytoplasm. The catalysed reaction is (6R)-5,10-methylene-5,6,7,8-tetrahydrofolate + glycine + H2O = (6S)-5,6,7,8-tetrahydrofolate + L-serine. It participates in one-carbon metabolism; tetrahydrofolate interconversion. It functions in the pathway amino-acid biosynthesis; glycine biosynthesis; glycine from L-serine: step 1/1. Catalyzes the reversible interconversion of serine and glycine with tetrahydrofolate (THF) serving as the one-carbon carrier. This reaction serves as the major source of one-carbon groups required for the biosynthesis of purines, thymidylate, methionine, and other important biomolecules. Also exhibits THF-independent aldolase activity toward beta-hydroxyamino acids, producing glycine and aldehydes, via a retro-aldol mechanism. This is Serine hydroxymethyltransferase from Prochlorococcus marinus (strain MIT 9211).